The sequence spans 302 residues: Cuticle collagen dpy-13 (302 aa).

3 triple-helical region regions span residues 106–135, 154–210, and 219–278; these read GPQGAPGAPGKPGRPGKPGAPGFPGNPGKA, GPPG…EGLP, and GEPG…PGTP. Positions 108–284 are disordered; the sequence is QGAPGAPGKP…PGTPGERGIC (177 aa). Over residues 144–159 the composition is skewed to pro residues; it reads TPPPCKPCPQGPPGAP. Over residues 188 to 197 the composition is skewed to low complexity; that stretch reads PKGPNGAPGK. 2 stretches are compositionally biased toward pro residues: residues 247–257 and 268–277; these read QPGPKGPPGPD and QPGPVGPPGT.

This sequence belongs to the cuticular collagen family. Collagen polypeptide chains are complexed within the cuticle by disulfide bonds and other types of covalent cross-links.

Functionally, nematode cuticles are composed largely of collagen-like proteins. The cuticle functions both as an exoskeleton and as a barrier to protect the worm from its environment. Mutations in dpy-13 affects the body shape. The polypeptide is Cuticle collagen dpy-13 (dpy-13) (Caenorhabditis elegans).